A 946-amino-acid polypeptide reads, in one-letter code: DDB1- and CUL4-associated factor 5 (946 aa).

WD repeat units lie at residues 51–91 (GHFG…HSRV), 99–139 (EHHS…LDVF), 140–180 (AHED…HGEP), 185–225 (NYPS…SSLL), 277–317 (FNSC…EAGG), and 331–370 (GHRSIVNQVRFNPHTYMICSSGVEKIIKIWSPYKQPGCTG). A disordered region spans residues 449–478 (GVSERSGYTDSESSASLPRSPPPTVDESAD). Over residues 454–465 (SGYTDSESSASL) the composition is skewed to polar residues. Threonine 500 bears the Phosphothreonine mark. Disordered regions lie at residues 527–656 (LSNE…MESV), 675–860 (SNNK…ELET), and 894–946 (CETP…KLKT). A phosphoserine mark is found at serine 531 and serine 533. Positions 531-544 (SDSEENVCEAELDT) are enriched in acidic residues. Residues 555-567 (PEDGSSSPSSSTS) are compositionally biased toward low complexity. The span at 579–592 (ATTRQRNAMRRRQK) shows a compositional bias: basic residues. The span at 625-638 (LSPSPDSSPERSAS) shows a compositional bias: low complexity. Residues serine 626, serine 628, and serine 645 each carry the phosphoserine modification. Basic and acidic residues predominate over residues 691–701 (EGRAGTSHKDN). 2 stretches are compositionally biased toward polar residues: residues 760–769 (GTSQDTNNSG) and 808–819 (TLNSASGNCPRT).

As to quaternary structure, interacts with DDB1, CUL4A or CUL4B. Interacts with L3MBTL3. Interacts with SOX2. Interacts with DNMT1. Interacts with E2F1.

Its pathway is protein modification; protein ubiquitination. Functionally, is a substrate receptor for the CUL4-DDB1 E3 ubiquitin-protein ligase complex (CRL4), involved in the ubiquitination of a set of methylated non-histone proteins, including SOX2. The complex CRL4-DCAF5 is also involved in the ubiquitination of methylated DNMT1 and E2F1. The protein is DDB1- and CUL4-associated factor 5 (Dcaf5) of Mus musculus (Mouse).